Consider the following 78-residue polypeptide: Small ribosomal subunit protein bS18 (78 aa).

The protein belongs to the bacterial ribosomal protein bS18 family. Part of the 30S ribosomal subunit. Forms a tight heterodimer with protein bS6.

Its function is as follows. Binds as a heterodimer with protein bS6 to the central domain of the 16S rRNA, where it helps stabilize the platform of the 30S subunit. This is Small ribosomal subunit protein bS18 from Alkaliphilus oremlandii (strain OhILAs) (Clostridium oremlandii (strain OhILAs)).